The following is a 451-amino-acid chain: Cyclin-dependent kinase 14 (451 aa).

Phosphoserine is present on residues S60 and S77. The interval 84–114 (NFKTSSTGKESPKVRRHSSPSSPTSPKFGKA) is disordered. S116 bears the Phosphoserine mark. In terms of domain architecture, Protein kinase spans 117 to 401 (YEKLEKLGEG…AQAALSHEYF (285 aa)). ATP is bound by residues 123–131 (LGEGSYATV) and K146. D238 serves as the catalytic Proton acceptor.

This sequence belongs to the protein kinase superfamily. CMGC Ser/Thr protein kinase family. CDC2/CDKX subfamily. Found in a complex with LRP6, CCNY and CAPRIN2 during G2/M stage; CAPRIN2 functions as a scaffold for the complex by binding to CCNY via its N terminus and to CDK14 via its C terminus. Interacts with CCNY; CCNY mediates its recruitment to the plasma membrane and promotes phosphorylation of LRP6. Interacts with CCDN3 and CDKN1A. Interacts with SEPT8. Interacts with 14-3-3 proteina YWHAB, YWHAE, YWHAH and YWHAQ.

It localises to the cell membrane. The protein localises to the cytoplasm. Its subcellular location is the nucleus. It catalyses the reaction L-seryl-[protein] + ATP = O-phospho-L-seryl-[protein] + ADP + H(+). The catalysed reaction is L-threonyl-[protein] + ATP = O-phospho-L-threonyl-[protein] + ADP + H(+). Serine/threonine-protein kinase activity is promoted by associated cyclins CCDN3 and CCNY and repressed by CDKN1A. Its function is as follows. Serine/threonine-protein kinase involved in the control of the eukaryotic cell cycle, whose activity is controlled by an associated cyclin. Acts as a cell-cycle regulator of Wnt signaling pathway during G2/M phase by mediating the phosphorylation of LRP6 at 'Ser-1490', leading to the activation of the Wnt signaling pathway. Acts as a regulator of cell cycle progression and cell proliferation via its interaction with CCDN3. Phosphorylates RB1 in vitro, however the relevance of such result remains to be confirmed in vivo. May also play a role in meiosis, neuron differentiation and may indirectly act as a negative regulator of insulin-responsive glucose transport. In Plecturocebus moloch (Dusky titi monkey), this protein is Cyclin-dependent kinase 14 (CDK14).